The primary structure comprises 116 residues: Ribosome-binding factor A (116 aa).

The protein belongs to the RbfA family. In terms of assembly, monomer. Binds 30S ribosomal subunits, but not 50S ribosomal subunits or 70S ribosomes.

The protein localises to the cytoplasm. Its function is as follows. One of several proteins that assist in the late maturation steps of the functional core of the 30S ribosomal subunit. Associates with free 30S ribosomal subunits (but not with 30S subunits that are part of 70S ribosomes or polysomes). Required for efficient processing of 16S rRNA. May interact with the 5'-terminal helix region of 16S rRNA. This is Ribosome-binding factor A from Enterococcus faecalis (strain ATCC 700802 / V583).